Here is a 450-residue protein sequence, read N- to C-terminus: Phosphoglucosamine mutase (450 aa).

The active-site Phosphoserine intermediate is S102. Mg(2+) contacts are provided by S102, D243, D245, and D247. A Phosphoserine modification is found at S102.

The protein belongs to the phosphohexose mutase family. Mg(2+) serves as cofactor. In terms of processing, activated by phosphorylation.

The enzyme catalyses alpha-D-glucosamine 1-phosphate = D-glucosamine 6-phosphate. In terms of biological role, catalyzes the conversion of glucosamine-6-phosphate to glucosamine-1-phosphate. The chain is Phosphoglucosamine mutase from Rhizobium meliloti (strain 1021) (Ensifer meliloti).